The primary structure comprises 563 residues: Arginine--tRNA ligase (563 aa).

The 'HIGH' region motif lies at 121-131 (PNIAKPFSIGH).

It belongs to the class-I aminoacyl-tRNA synthetase family. As to quaternary structure, monomer.

It localises to the cytoplasm. The catalysed reaction is tRNA(Arg) + L-arginine + ATP = L-arginyl-tRNA(Arg) + AMP + diphosphate. This Streptococcus pneumoniae serotype 4 (strain ATCC BAA-334 / TIGR4) protein is Arginine--tRNA ligase (argS).